The following is a 680-amino-acid chain: WD repeat-containing protein 48 homolog (680 aa).

8 WD repeats span residues 26-65 (QHRN…SEKY), 71-110 (HHND…CMST), 113-152 (THRD…ALTA), 164-203 (GSKD…RSMK), 206-245 (GHTE…CVQT), 248-287 (VHKE…NKTL), 290-329 (EEKA…RGTL), and 350-389 (KGGA…KKDT). The interval 594-618 (TPSGANANNSLQNSQSDGNSEGSQL) is disordered. Over residues 596 to 609 (SGANANNSLQNSQS) the composition is skewed to low complexity.

Belongs to the WD repeat WDR48 family. In terms of assembly, catalytic component of the Usp12-46 deubiquitylase complex consisting of Usp12-46, Wdr20 and Uaf1; regulatory subunit that, together wtih Wdr20, stabilizes Usp12-46. The Usp12-46 deubiquitylase complex associates with arr/arrow; the interaction leads to deubiquitination and stabilization of arr/arrow.

In terms of biological role, regulatory component of the Usp12-46 deubiquitylase complex. activates deubiquitination by increasing the catalytic turnover without increasing the affinity of deubiquitinating enzymes for the substrate. The complex deubiquitylates the wg/wingless-signaling receptor arr/arrow, which stabilizes the receptor and increases its concentration at the cell surface; this enhances the sensitivity of cells to wg/wingless-signal stimulation. This increases the amplitude and spatial range of the signaling response to the wg/wingless morphogen gradient, facilitating the precise concentration-dependent regulation of its target genes. Together with Wdr20 and Usp12-46 required for wg/wingless-mediated signaling in the wing imaginal disc and for wg/wingless-dependent regulation of intestinal stem cell proliferation. The chain is WD repeat-containing protein 48 homolog from Drosophila persimilis (Fruit fly).